The following is a 425-amino-acid chain: Serine--tRNA ligase (425 aa).

230–232 lines the L-serine pocket; sequence TAE. 261 to 263 contributes to the ATP binding site; the sequence is RSE. Glutamate 284 is a binding site for L-serine. 348–351 lines the ATP pocket; the sequence is EISS. L-serine is bound at residue serine 384.

The protein belongs to the class-II aminoacyl-tRNA synthetase family. Type-1 seryl-tRNA synthetase subfamily. Homodimer. The tRNA molecule binds across the dimer.

The protein localises to the cytoplasm. The enzyme catalyses tRNA(Ser) + L-serine + ATP = L-seryl-tRNA(Ser) + AMP + diphosphate + H(+). The catalysed reaction is tRNA(Sec) + L-serine + ATP = L-seryl-tRNA(Sec) + AMP + diphosphate + H(+). It participates in aminoacyl-tRNA biosynthesis; selenocysteinyl-tRNA(Sec) biosynthesis; L-seryl-tRNA(Sec) from L-serine and tRNA(Sec): step 1/1. Functionally, catalyzes the attachment of serine to tRNA(Ser). Is also able to aminoacylate tRNA(Sec) with serine, to form the misacylated tRNA L-seryl-tRNA(Sec), which will be further converted into selenocysteinyl-tRNA(Sec). The chain is Serine--tRNA ligase from Streptococcus equi subsp. zooepidemicus (strain H70).